The primary structure comprises 443 residues: Ribosomal protein uS12 methylthiotransferase RimO (443 aa).

The region spanning 8-118 (PKIGFVSLGC…VLSHIHHYVP (111 aa)) is the MTTase N-terminal domain. Cys17, Cys53, Cys82, Cys150, Cys154, and Cys157 together coordinate [4Fe-4S] cluster. A Radical SAM core domain is found at 136–373 (LTPRHYAYLK…MQLQQQISTE (238 aa)). One can recognise a TRAM domain in the interval 376–442 (QEKIGKVLPV…EYDLWGTIVE (67 aa)).

It belongs to the methylthiotransferase family. RimO subfamily. [4Fe-4S] cluster serves as cofactor.

The protein resides in the cytoplasm. It catalyses the reaction L-aspartate(89)-[ribosomal protein uS12]-hydrogen + (sulfur carrier)-SH + AH2 + 2 S-adenosyl-L-methionine = 3-methylsulfanyl-L-aspartate(89)-[ribosomal protein uS12]-hydrogen + (sulfur carrier)-H + 5'-deoxyadenosine + L-methionine + A + S-adenosyl-L-homocysteine + 2 H(+). In terms of biological role, catalyzes the methylthiolation of an aspartic acid residue of ribosomal protein uS12. The protein is Ribosomal protein uS12 methylthiotransferase RimO of Proteus mirabilis (strain HI4320).